The sequence spans 233 residues: Probable septum site-determining protein MinC (233 aa).

Positions 98 to 123 are disordered; the sequence is LTEGKEKAPRPAPSEPTPPPPPVANQ. The span at 107–120 shows a compositional bias: pro residues; the sequence is RPAPSEPTPPPPPV.

This sequence belongs to the MinC family. As to quaternary structure, interacts with MinD and FtsZ.

Cell division inhibitor that blocks the formation of polar Z ring septums. Rapidly oscillates between the poles of the cell to destabilize FtsZ filaments that have formed before they mature into polar Z rings. Prevents FtsZ polymerization. The chain is Probable septum site-determining protein MinC from Klebsiella pneumoniae (strain 342).